The chain runs to 68 residues: Peptide Hp1412 (68 aa).

A signal peptide spans 1-23 (MKTHFAIFLITLFLFQMFSQSDA). Cysteine 36 carries the cysteine amide modification. A propeptide spanning residues 40-68 (GLSDLYDLDEMFDGEISQADIDFLKELMR) is cleaved from the precursor.

The protein belongs to the non-disulfide-bridged peptide (NDBP) superfamily. Short antimicrobial peptide (group 4) family. Expressed by the venom gland.

The protein localises to the secreted. It localises to the target cell membrane. Its function is as follows. Amphipathic peptide with antimicrobial activity. The sequence is that of Peptide Hp1412 from Heterometrus petersii (Asian forest scorpion).